Reading from the N-terminus, the 744-residue chain is MATANFGKIQIGIYVEIKRSDGRIHQAMVTSLNEDNESVTVEWIENGDTKGKEIDLESIFSLNPDLVPDEEIEPSPETPPPPASSAKVNKIVKNRRTVASIKNDPPPRDNRVVGSARARPSQFPEQSSSAQQNGSVSDISPVQAAKKEFGPPSRRKSNCVKEVEKLQEKREKRRLQQQELREKRAQDVDATNPNYEIMCMIRDFRGSLDYRPLTTADPIDEHRICVCVRKRPLNKKETQMKDLDVITIPSKDVVMVHEPKQKVDLTRYLENQTFRFDYAFDDSAPNEMVYRFTARPLVETIFERGMATCFAYGQTGSGKTHTMGGDFSGKNQDCSKGIYALAARDVFLMLKKPNYKKLELQVYATFFEIYSGKVFDLLNRKTKLRVLEDGKQQVQVVGLQEREVKCVEDVLKLIDIGNSCRTSGQTSANAHSSRSHAVFQIILRRKGKLHGKFSLIDLAGNERGADTSSADRQTRLEGAEINKSLLALKECIRALGRNKPHTPFRASKLTQVLRDSFIGENSRTCMIATISPGMASCENTLNTLRYANRVKEFGISPSDIPFSQGSGSRPDLSPSYEYDDFSPSVTRVKELTVDPTAAGDVRPIMHHPPNQIDDLETQWGVGSSPQRDDLKLLCEQNEEEVSPQLFTFHEAVSQMVEMEEQVVEDHRAVFQESIRWLEDEKALLEMTEEVDYDVDSYATQLEAILEQKIDILTELRDKVKSFRAALQEEEQASKQINPKRPRAL.

The disordered stretch occupies residues 66-186 (LVPDEEIEPS…QQELREKRAQ (121 aa)). Ser-75 is modified (phosphoserine). Phosphothreonine is present on residues Thr-78 and Thr-97. Residue Ser-100 is modified to Phosphoserine. The residue at position 102 (Lys-102) is an N6-acetyllysine. Residues 123-140 (FPEQSSSAQQNGSVSDIS) are compositionally biased toward polar residues. Residues Ser-135 and Ser-140 each carry the phosphoserine modification. The stretch at 154 to 187 (RRKSNCVKEVEKLQEKREKRRLQQQELREKRAQD) forms a coiled coil. Residues 159-186 (CVKEVEKLQEKREKRRLQQQELREKRAQ) are compositionally biased toward basic and acidic residues. Residues 223–553 (RICVCVRKRP…LRYANRVKEF (331 aa)) form the Kinesin motor domain. An ATP-binding site is contributed by 313–320 (GQTGSGKT). A coiled-coil region spans residues 698-737 (ATQLEAILEQKIDILTELRDKVKSFRAALQEEEQASKQIN).

The protein belongs to the TRAFAC class myosin-kinesin ATPase superfamily. Kinesin family. MCAK/KIF2 subfamily. As to quaternary structure, interacts with AURKA and PLK1. Interacts with PSRC1. Interacts with MCRS1; the interaction enhances recruitment of KIF2A to the minus ends of spindle microtubules which promotes chromosome alignment.

The protein localises to the cytoplasm. Its subcellular location is the cytoskeleton. It localises to the microtubule organizing center. It is found in the centrosome. The protein resides in the spindle pole. The protein localises to the spindle. Functionally, plus end-directed microtubule-dependent motor required for normal brain development. May regulate microtubule dynamics during axonal growth. Required for normal progression through mitosis. Required for normal congress of chromosomes at the metaphase plate. Required for normal spindle dynamics during mitosis. Promotes spindle turnover. Implicated in formation of bipolar mitotic spindles. Has microtubule depolymerization activity. This chain is Kinesin-like protein KIF2A, found in Pongo abelii (Sumatran orangutan).